Reading from the N-terminus, the 259-residue chain is Imidazole glycerol phosphate synthase subunit HisF (259 aa).

Catalysis depends on residues Asp11 and Asp130.

It belongs to the HisA/HisF family. As to quaternary structure, heterodimer of HisH and HisF.

The protein resides in the cytoplasm. It catalyses the reaction 5-[(5-phospho-1-deoxy-D-ribulos-1-ylimino)methylamino]-1-(5-phospho-beta-D-ribosyl)imidazole-4-carboxamide + L-glutamine = D-erythro-1-(imidazol-4-yl)glycerol 3-phosphate + 5-amino-1-(5-phospho-beta-D-ribosyl)imidazole-4-carboxamide + L-glutamate + H(+). It participates in amino-acid biosynthesis; L-histidine biosynthesis; L-histidine from 5-phospho-alpha-D-ribose 1-diphosphate: step 5/9. IGPS catalyzes the conversion of PRFAR and glutamine to IGP, AICAR and glutamate. The HisF subunit catalyzes the cyclization activity that produces IGP and AICAR from PRFAR using the ammonia provided by the HisH subunit. This is Imidazole glycerol phosphate synthase subunit HisF from Lactococcus lactis subsp. cremoris (strain SK11).